Reading from the N-terminus, the 144-residue chain is Dynein light chain Tctex-type protein 2B (144 aa).

It belongs to the dynein light chain Tctex-type family. As to quaternary structure, light chain of the cytoplasmic dynein complex 2, a multisubunit complex composed at least of eleven different proteins. The cytoplasmic dynein 2 complex consists of two catalytic heavy chains (HCs) and a number of non-catalytic subunits presented by intermediate chains (ICs), light intermediate chains (LICs) and light chains (LCs). Among them, a heavy chain (DYNC2H1), two intermediate chains (DYNC2I2 and DYNC2I1), a light intermediate chain (DYNC2LI1), and a light chain (DYNLT2B) are unique to the dynein-2 complex, but a subset of the light chains are also shared by dynein-1 and dynein-2 complexes. The dimer DYNLT2B-DYNLT1/DYNLT3 interacts with DYNC2I1; this interaction is crucial for retrograde trafficking of ciliary proteins.

It is found in the dynein axonemal particle. Acts as one of several non-catalytic accessory components of the cytoplasmic dynein 2 complex (dynein-2 complex), a motor protein complex that drives the movement of cargos along microtubules within cilia and flagella in concert with the intraflagellar transport (IFT) system. Required for proper retrograde ciliary transport. The sequence is that of Dynein light chain Tctex-type protein 2B (Dynlt2b) from Mus musculus (Mouse).